A 128-amino-acid chain; its full sequence is Regulator of ribonuclease activity B (128 aa).

This sequence belongs to the RraB family. Interacts with the C-terminal region of Rne.

It is found in the cytoplasm. Functionally, globally modulates RNA abundance by binding to RNase E (Rne) and regulating its endonucleolytic activity. Can modulate Rne action in a substrate-dependent manner by altering the composition of the degradosome. In Idiomarina loihiensis (strain ATCC BAA-735 / DSM 15497 / L2-TR), this protein is Regulator of ribonuclease activity B.